We begin with the raw amino-acid sequence, 910 residues long: Dimethylsulfide dehydrogenase subunit alpha (910 aa).

A signal peptide (tat-type signal) is located at residues 1 to 28; that stretch reads MLRTTRRTLMQGASLVGAGLFAAGRGWA. The 4Fe-4S Mo/W bis-MGD-type domain occupies 59 to 123; the sequence is DYVGKAAHCI…IHSTSMYEAD (65 aa). [4Fe-4S] cluster is bound by residues His-66, Cys-70, Cys-74, and Cys-109.

It belongs to the prokaryotic molybdopterin-containing oxidoreductase family. In terms of assembly, heterotrimer of alpha, beta and gamma subunits. [4Fe-4S] cluster is required as a cofactor. The cofactor is Mo-bis(molybdopterin guanine dinucleotide). In terms of processing, predicted to be exported by the Tat system. The position of the signal peptide cleavage has been experimentally proven.

The protein localises to the periplasm. It carries out the reaction 2 Fe(III)-[cytochrome c2] + dimethyl sulfide + H2O = 2 Fe(II)-[cytochrome c2] + dimethyl sulfoxide + 2 H(+). In terms of biological role, allows photoautotrophic growth on dimethyl sulfide (DMS) as the sole electron donor. This chain is Dimethylsulfide dehydrogenase subunit alpha (ddhA), found in Rhodovulum sulfidophilum (Rhodobacter sulfidophilus).